The chain runs to 241 residues: Triosephosphate isomerase (241 aa).

A substrate-binding site is contributed by N9–K11. H96 (electrophile) is an active-site residue. The active-site Proton acceptor is the E165. Substrate is bound by residues G171, S204, and G225–G226.

It belongs to the triosephosphate isomerase family. In terms of assembly, homodimer.

It localises to the cytoplasm. The enzyme catalyses D-glyceraldehyde 3-phosphate = dihydroxyacetone phosphate. Its pathway is carbohydrate biosynthesis; gluconeogenesis. The protein operates within carbohydrate degradation; glycolysis; D-glyceraldehyde 3-phosphate from glycerone phosphate: step 1/1. Functionally, involved in the gluconeogenesis. Catalyzes stereospecifically the conversion of dihydroxyacetone phosphate (DHAP) to D-glyceraldehyde-3-phosphate (G3P). The protein is Triosephosphate isomerase of Prochlorococcus marinus (strain MIT 9312).